A 438-amino-acid chain; its full sequence is MTIATERYSRSQANFAAAQAVIPGGVNSPVRAFRGVGGSPIFFERGQGAHIWDVDGNRYIDYVLSWGPLLLGHAHPAVVNAIATQAQRGTSFGAPTELETDLARLVLDLVPSIEQIRFVNSGTEATMSALRLARAATGRRLIVKFNGCYHGHADMLLVQAGSGVATLGLPDSPGVPPTVAADTITIEYNDLDAAADLFARRGSEIAAVIVEPIAANMGFVLPKPGFLSGLRELTQQHGAIFILDEVMTGFRVAPGGAQALWNLDPDLTCLGKVIGGGLPVGAYAGKRHLMQLVAPAGPMYQAGTLSGNPLAMIAGLTTLRTAFTDDNTAFQRAVTLTTRLANGLRELGERYRIPLQVGNVGTMFGCYFLRHADAQITNYVEAKANADTQRYARFFWAMADRGIYLAPSQFEAGFVSTAHTDADIDQTLTAVEEAFAQL.

K272 carries the N6-(pyridoxal phosphate)lysine modification.

Belongs to the class-III pyridoxal-phosphate-dependent aminotransferase family. HemL subfamily. As to quaternary structure, homodimer. Pyridoxal 5'-phosphate is required as a cofactor.

The protein localises to the cytoplasm. It carries out the reaction (S)-4-amino-5-oxopentanoate = 5-aminolevulinate. Its pathway is porphyrin-containing compound metabolism; protoporphyrin-IX biosynthesis; 5-aminolevulinate from L-glutamyl-tRNA(Glu): step 2/2. The protein operates within porphyrin-containing compound metabolism; chlorophyll biosynthesis. The polypeptide is Glutamate-1-semialdehyde 2,1-aminomutase (Chloroflexus aggregans (strain MD-66 / DSM 9485)).